A 676-amino-acid polypeptide reads, in one-letter code: UvrABC system protein B (676 aa).

Positions 26–414 (EGLDAGLAHQ…SAGEIADQVV (389 aa)) constitute a Helicase ATP-binding domain. Position 39-46 (39-46 (GVTGSGKT)) interacts with ATP. The short motif at 92 to 115 (YYDYYQPEAYVPTTDTFIEKDASV) is the Beta-hairpin element. The region spanning 432 to 598 (QVDDLLSEIR…ALKRNIKDIM (167 aa)) is the Helicase C-terminal domain. A UVR domain is found at 636–671 (EKEISRLEAAMYQHAQDLEFELAAEKRDEIEKLRAQ).

The protein belongs to the UvrB family. In terms of assembly, forms a heterotetramer with UvrA during the search for lesions. Interacts with UvrC in an incision complex.

Its subcellular location is the cytoplasm. In terms of biological role, the UvrABC repair system catalyzes the recognition and processing of DNA lesions. A damage recognition complex composed of 2 UvrA and 2 UvrB subunits scans DNA for abnormalities. Upon binding of the UvrA(2)B(2) complex to a putative damaged site, the DNA wraps around one UvrB monomer. DNA wrap is dependent on ATP binding by UvrB and probably causes local melting of the DNA helix, facilitating insertion of UvrB beta-hairpin between the DNA strands. Then UvrB probes one DNA strand for the presence of a lesion. If a lesion is found the UvrA subunits dissociate and the UvrB-DNA preincision complex is formed. This complex is subsequently bound by UvrC and the second UvrB is released. If no lesion is found, the DNA wraps around the other UvrB subunit that will check the other stand for damage. The protein is UvrABC system protein B of Vibrio parahaemolyticus serotype O3:K6 (strain RIMD 2210633).